Reading from the N-terminus, the 240-residue chain is Membrane-spanning 4-domains subfamily A member 7 (240 aa).

Residues 1-47 (MLLQSQTMGVSHSFTPKGITIPQREKPGHMYQNEDYLQNGLPTETTV) are Cytoplasmic-facing. Residues 48–68 (LGTVQILCCLLISSLGAILVF) traverse the membrane as a helical segment. The Extracellular portion of the chain corresponds to 69-83 (APYPSHFNPAISTTL). Residues 84-104 (MSGYPFLGALCFGITGSLSII) form a helical membrane-spanning segment. Topologically, residues 105 to 121 (SGKQSTKPFDLSSLTSN) are cytoplasmic. A helical transmembrane segment spans residues 122–142 (AVSSVTAGAGLFLLADSMVAL). Over 143 to 178 (RTASQHCGSEMDYLSSLPYSEYYYPIYEIKDCLLTS) the chain is Extracellular. Residues 179–199 (VSLTGVLVVMLIFTVLELLLA) form a helical membrane-spanning segment. At 200–240 (AYSSVFWWKQLYSNNPGSSFSSTQSQDHIQQVKKSSSRSWI) the chain is on the cytoplasmic side. Residues 218–240 (SFSSTQSQDHIQQVKKSSSRSWI) form a disordered region.

Belongs to the MS4A family. As to expression, ubiquitous expression in normal tissues. Expression is more elevated in adult liver, lung, spleen, and heart than in their fetal counterparts, and is higher in normal tissues than in the cancerous tissue or cell lines. Low levels of expression were detected in the promonocytic stage, whereas high levels of expression were detected in mature monocytes.

The protein localises to the membrane. Functionally, may be involved in signal transduction as a component of a multimeric receptor complex. This Homo sapiens (Human) protein is Membrane-spanning 4-domains subfamily A member 7 (MS4A7).